Consider the following 379-residue polypeptide: Cytochrome b (379 aa).

Helical transmembrane passes span 33-53 (FGSL…FLAM), 77-98 (WLIR…YLHI), 113-133 (WNIG…GYVL), and 178-198 (FFAF…VHLL). Heme b-binding residues include H83 and H97. H182 and H196 together coordinate heme b. H201 contacts a ubiquinone. A run of 4 helical transmembrane segments spans residues 226 to 246 (TKDF…VLFF), 288 to 308 (MGGV…PHIQ), 320 to 340 (ISQF…WIGG), and 347 to 367 (FIII…AFLP).

Belongs to the cytochrome b family. The cytochrome bc1 complex contains 11 subunits: 3 respiratory subunits (MT-CYB, CYC1 and UQCRFS1), 2 core proteins (UQCRC1 and UQCRC2) and 6 low-molecular weight proteins (UQCRH/QCR6, UQCRB/QCR7, UQCRQ/QCR8, UQCR10/QCR9, UQCR11/QCR10 and a cleavage product of UQCRFS1). This cytochrome bc1 complex then forms a dimer. The cofactor is heme b.

The protein localises to the mitochondrion inner membrane. Component of the ubiquinol-cytochrome c reductase complex (complex III or cytochrome b-c1 complex) that is part of the mitochondrial respiratory chain. The b-c1 complex mediates electron transfer from ubiquinol to cytochrome c. Contributes to the generation of a proton gradient across the mitochondrial membrane that is then used for ATP synthesis. This Dipodomys ordii (Ord's kangaroo rat) protein is Cytochrome b (MT-CYB).